We begin with the raw amino-acid sequence, 185 residues long: MAPKGGSKQQSEEDLLLQDFSRNLSAKSSALFFGNAFIVSAIPIWLYWRIWHMDLIQSAVLYSVMTLVSTYLVAFAYKNVKFVLKHKVAQKREDAVSKEVTRKLSEADNRKMSRKEKDERILWKKNEVADYEATTFSIFYNNTLFLVLVIVASFFILKNFNPTVNYILSISASSGLIALLSTGSK.

At M1 the chain carries N-acetylmethionine. Residues 1-27 (MAPKGGSKQQSEEDLLLQDFSRNLSAK) lie on the Lumenal side of the membrane. A phosphoserine mark is found at S7 and S11. The chain crosses the membrane as a helical span at residues 28-48 (SSALFFGNAFIVSAIPIWLYW). Residues 49–54 (RIWHMD) are Cytoplasmic-facing. The chain crosses the membrane as a helical span at residues 55 to 76 (LIQSAVLYSVMTLVSTYLVAFA). The Lumenal segment spans residues 77-135 (YKNVKFVLKHKVAQKREDAVSKEVTRKLSEADNRKMSRKEKDERILWKKNEVADYEATT). Position 105 is a phosphoserine (S105). The helical transmembrane segment at 136-157 (FSIFYNNTLFLVLVIVASFFIL) threads the bilayer. Residues 158-163 (KNFNPT) lie on the Cytoplasmic side of the membrane. A helical transmembrane segment spans residues 164-184 (VNYILSISASSGLIALLSTGS).

It belongs to the TRAP-gamma family. In terms of assembly, heterotetramer of TRAP-alpha, TRAP-beta, TRAP-delta and TRAP-gamma.

The protein resides in the endoplasmic reticulum membrane. TRAP proteins are part of a complex whose function is to bind calcium to the ER membrane and thereby regulate the retention of ER resident proteins. The sequence is that of Translocon-associated protein subunit gamma (Ssr3) from Mus musculus (Mouse).